A 551-amino-acid polypeptide reads, in one-letter code: Cation/acetate symporter ActP (551 aa).

13 helical membrane passes run 34–54 (IEAIVMFVLFVGATLYITYWA), 77–97 (GLAIAGDFMSAASFLGISALV), 104–124 (GLIYSIGFLIGWPIILFLIAE), 150–170 (LSACGSLVVVALYLIAQMVGA), 184–204 (VAVVLVGILMVMYVLFGGMLA), 207–227 (WVQIIKAVLLLAGASFMALMV), 263–283 (ISALSLGLALMFGTAGLPHIL), 304–324 (GFIGYFYILTFIIGFGAILLV), 356–376 (FFLGFISAVAFATILAVVAGL), 406–426 (VSKITVVVLGFVAIGLGILFE), 430–450 (IAFMVGLAFSIAASCNFPIIF), 469–489 (LGLLTAVILMILGPTIWVTIL), and 498–518 (YEYPALFSMIVAFVGIWFFSI).

The protein belongs to the sodium:solute symporter (SSF) (TC 2.A.21) family.

The protein localises to the cell inner membrane. In terms of biological role, transports acetate. The sequence is that of Cation/acetate symporter ActP from Yersinia enterocolitica serotype O:8 / biotype 1B (strain NCTC 13174 / 8081).